A 185-amino-acid polypeptide reads, in one-letter code: Ribosome-recycling factor (185 aa).

Belongs to the RRF family.

Its subcellular location is the cytoplasm. In terms of biological role, responsible for the release of ribosomes from messenger RNA at the termination of protein biosynthesis. May increase the efficiency of translation by recycling ribosomes from one round of translation to another. In Salinispora arenicola (strain CNS-205), this protein is Ribosome-recycling factor.